We begin with the raw amino-acid sequence, 281 residues long: Bifunctional protein FolD (281 aa).

NADP(+) contacts are provided by residues 164-166 (GRS), S189, and I230.

This sequence belongs to the tetrahydrofolate dehydrogenase/cyclohydrolase family. In terms of assembly, homodimer.

It catalyses the reaction (6R)-5,10-methylene-5,6,7,8-tetrahydrofolate + NADP(+) = (6R)-5,10-methenyltetrahydrofolate + NADPH. The catalysed reaction is (6R)-5,10-methenyltetrahydrofolate + H2O = (6R)-10-formyltetrahydrofolate + H(+). It functions in the pathway one-carbon metabolism; tetrahydrofolate interconversion. Functionally, catalyzes the oxidation of 5,10-methylenetetrahydrofolate to 5,10-methenyltetrahydrofolate and then the hydrolysis of 5,10-methenyltetrahydrofolate to 10-formyltetrahydrofolate. This chain is Bifunctional protein FolD, found in Pelagibacter ubique (strain HTCC1062).